The chain runs to 102 residues: Integration host factor subunit beta (102 aa).

The segment at 54 to 102 (HHRPARMGRNPKTGEPVALPAKYVPHFKPGKELRERVNSSRHQAPLRSQ) is disordered. Over residues 82 to 91 (PGKELRERVN) the composition is skewed to basic and acidic residues. Residues 93–102 (SRHQAPLRSQ) are compositionally biased toward polar residues.

The protein belongs to the bacterial histone-like protein family. In terms of assembly, heterodimer of an alpha and a beta chain.

Functionally, this protein is one of the two subunits of integration host factor, a specific DNA-binding protein that functions in genetic recombination as well as in transcriptional and translational control. This is Integration host factor subunit beta from Halorhodospira halophila (strain DSM 244 / SL1) (Ectothiorhodospira halophila (strain DSM 244 / SL1)).